Consider the following 85-residue polypeptide: MKNHPRKVKFRVSSAKFICIYWFFCLYYKDGPILYTIYTTFLSHRYSYSTFIILRNTVAFLSFMYKHYYTHISYLTFYKSPKTFY.

2 helical membrane passes run 20 to 42 (IYWF…TTFL) and 52 to 69 (IILR…KHYY).

It is found in the membrane. This is an uncharacterized protein from Saccharomyces cerevisiae (strain ATCC 204508 / S288c) (Baker's yeast).